The sequence spans 101 residues: Small ribosomal subunit protein uS14 (101 aa).

The segment at 32 to 67 (SDAKRSDEEREAARLGLQKLPRNANPTRQRNRCEIT) is disordered. Residues 33-44 (DAKRSDEEREAA) show a composition bias toward basic and acidic residues.

This sequence belongs to the universal ribosomal protein uS14 family. Part of the 30S ribosomal subunit. Contacts proteins S3 and S10.

Binds 16S rRNA, required for the assembly of 30S particles and may also be responsible for determining the conformation of the 16S rRNA at the A site. This chain is Small ribosomal subunit protein uS14, found in Paracidovorax citrulli (strain AAC00-1) (Acidovorax citrulli).